The sequence spans 2435 residues: ATP-binding cassette sub-family A member 2 (2435 aa).

N-linked (GlcNAc...) asparagine glycosylation occurs at N14. 2 helical membrane-spanning segments follow: residues 22–42 (PWVLAFEIFIPLVLFFILLGL) and 54–74 (AFYTAAPLTSAGILPVMQSLC). N89, N168, and N173 each carry an N-linked (GlcNAc...) asparagine glycan. Q271 carries the N5-methylglutamine modification. N305, N368, N379, N420, N432, N476, N484, N494, N530, N544, N590, N600, and N628 each carry an N-linked (GlcNAc...) asparagine glycan. Helical transmembrane passes span 699–719 (FLFVIEHMMPLCMVISWVYSV), 750–770 (VAWFITGFVQLSISVTALTAI), 782–802 (VVIIWLFLAVYAVATIMFCFL), 813–833 (ASACGGIIYFLSYVPYMYVAI), 857–877 (AFGLGSKYFALYEVAGVGIQW), and 893–913 (LLAVTMLMVDAVVYGILTWYI). Residues 990 to 1221 (VCVDKLTKVY…YGDGYRLTLV (232 aa)) enclose the ABC transporter 1 domain. 1024–1031 (GHNGAGKT) is an ATP binding site. 2 disordered regions span residues 1223–1243 (RPAEPGGPQEPGLASSPPGRA) and 1325–1357 (DQSLENSEADVKESRKDVLPGAEGPASGEGHAG). 3 positions are modified to phosphoserine: S1238, S1327, and S1331. A compositionally biased stretch (basic and acidic residues) spans 1333 to 1342 (ADVKESRKDV). A glycan (N-linked (GlcNAc...) asparagine) is linked at N1408. The chain crosses the membrane as a helical span at residues 1456–1476 (ALFSQILLPAFFVCVAMTVAL). 3 N-linked (GlcNAc...) asparagine glycosylation sites follow: N1496, N1549, and N1557. A disordered region spans residues 1586 to 1610 (SNFVPPPPSPAPSDSPASPDEDLQA). Positions 1589-1598 (VPPPPSPAPS) are enriched in pro residues. N1612, N1677, and N1775 each carry an N-linked (GlcNAc...) asparagine glycan. Transmembrane regions (helical) follow at residues 1792-1812 (VVIAIFIIVAMSFVPASFVVF), 1841-1861 (VWDMLNYLVPATCCVIILFVF), 1872-1892 (FPAVLSLFLLYGWSITPIMYP), 1905-1925 (VFLIVINLFIGITATVATFLL), and 1991-2011 (GLVAMAVEGVVGFLLTIMCQY). The region spanning 2050–2285 (VKIENLTKVY…FGDGYMITVR (236 aa)) is the ABC transporter 2 domain. N-linked (GlcNAc...) asparagine glycosylation occurs at N2054. Position 2087–2094 (2087–2094 (GVNGAGKT)) interacts with ATP. T2412 bears the Phosphothreonine mark.

This sequence belongs to the ABC transporter superfamily. ABCA family. Methylated at Gln-271 by N6AMT1. In terms of tissue distribution, highly expressed in the brain,peripheral blood leukocytes and ovary, whereas lower levels of expression is observed in kidney and liver. Weakly expressed in brain and highly in peripheral blood leukocytes.

The protein localises to the endosome membrane. It localises to the lysosome membrane. Its function is as follows. Probable lipid transporter that modulates cholesterol sequestration in the late endosome/lysosome by regulating the intracellular sphingolipid metabolism, in turn participates in cholesterol homeostasis. May alter the transbilayer distribution of ceramide in the intraluminal membrane lipid bilayer, favoring its retention in the outer leaflet that results in increased acid ceramidase activity in the late endosome/lysosome, facilitating ceramide deacylation to sphingosine leading to the sequestration of free cholesterol in lysosomes. In addition regulates amyloid-beta production either by activating a signaling pathway that regulates amyloid precursor protein transcription through the modulation of sphingolipid metabolism or through its role in gamma-secretase processing of APP. May play a role in myelin formation. The sequence is that of ATP-binding cassette sub-family A member 2 from Homo sapiens (Human).